Reading from the N-terminus, the 314-residue chain is Mitochondrial 2-oxoglutarate/malate carrier protein (314 aa).

At Ala-2 the chain carries N-acetylalanine. The residue at position 6 (Ser-6) is a Phosphoserine. Solcar repeat units follow at residues 23 to 108 (VKFL…LFER), 117 to 208 (PGFL…SKQF), and 217 to 306 (DNIL…MNKA). A helical transmembrane segment spans residues 24 to 42 (KFLFGGLAGMGATVFVQPL). At Lys-57 the chain carries N6-succinyllysine. Residue Lys-73 is modified to N6-acetyllysine. Residues 83-101 (GLSAGLLRQATYTTTRLGI) traverse the membrane as a helical segment. Tyr-102 is modified (phosphotyrosine). A run of 3 helical transmembrane segments spans residues 119–140 (FLLK…GPPA), 183–202 (GCIP…LASY), and 222–240 (HFCA…SMPV). Lys-256 bears the N6-acetyllysine mark. A helical transmembrane segment spans residues 281-300 (GFTPYYARLGPHTVLTFIFL).

This sequence belongs to the mitochondrial carrier (TC 2.A.29) family. In terms of assembly, interacts with SMIM26. In terms of tissue distribution, expressed in liver, heart and brain.

The protein localises to the mitochondrion inner membrane. It carries out the reaction (S)-malate(in) + 2-oxoglutarate(out) = (S)-malate(out) + 2-oxoglutarate(in). The catalysed reaction is malonate(in) + 2-oxoglutarate(out) = malonate(out) + 2-oxoglutarate(in). The enzyme catalyses succinate(in) + 2-oxoglutarate(out) = succinate(out) + 2-oxoglutarate(in). It catalyses the reaction maleate(in) + 2-oxoglutarate(out) = maleate(out) + 2-oxoglutarate(in). It carries out the reaction oxaloacetate(in) + 2-oxoglutarate(out) = oxaloacetate(out) + 2-oxoglutarate(in). In terms of biological role, catalyzes the transport of 2-oxoglutarate (alpha-oxoglutarate) across the inner mitochondrial membrane in an electroneutral exchange for malate. Can also exchange 2-oxoglutarate for other dicarboxylic acids such as malonate, succinate, maleate and oxaloacetate, although with lower affinity. Contributes to several metabolic processes, including the malate-aspartate shuttle, the oxoglutarate/isocitrate shuttle, in gluconeogenesis from lactate, and in nitrogen metabolism. Maintains mitochondrial fusion and fission events, and the organization and morphology of cristae. Involved in the regulation of apoptosis. Helps protect from cytotoxic-induced apoptosis by modulating glutathione levels in mitochondria. The chain is Mitochondrial 2-oxoglutarate/malate carrier protein (Slc25a11) from Rattus norvegicus (Rat).